Reading from the N-terminus, the 303-residue chain is Probable 5-dehydro-4-deoxyglucarate dehydratase (303 aa).

Belongs to the DapA family.

The enzyme catalyses 5-dehydro-4-deoxy-D-glucarate + H(+) = 2,5-dioxopentanoate + CO2 + H2O. It participates in carbohydrate acid metabolism; D-glucarate degradation; 2,5-dioxopentanoate from D-glucarate: step 2/2. The polypeptide is Probable 5-dehydro-4-deoxyglucarate dehydratase (Acinetobacter baylyi (strain ATCC 33305 / BD413 / ADP1)).